A 281-amino-acid polypeptide reads, in one-letter code: UPF0162 protein XF_1494 (281 aa).

TPR repeat units follow at residues 193–226 (VRIL…VPNQ) and 227–260 (PEAL…YPST).

It belongs to the UPF0162 family.

The chain is UPF0162 protein XF_1494 from Xylella fastidiosa (strain 9a5c).